The following is a 308-amino-acid chain: 1,4-dihydroxy-2-naphthoate octaprenyltransferase (308 aa).

The Cytoplasmic portion of the chain corresponds to 1 to 20 (MTEQQISRTQAWLESLRPKT). The helical transmembrane segment at 21-41 (LPLAFAAIIVGTALAWWQGHF) threads the bilayer. Asp-42 is a topological domain (periplasmic). Residues 43–63 (PLVALLALITAGLLQILSNLA) form a helical membrane-spanning segment. Over 64-97 (NDYGDAVKGSDKPDRIGPLRGMQKGVITQQEMKR) the chain is Cytoplasmic. Residues 98 to 118 (ALIITVVLICLSGLALVAVAC) traverse the membrane as a helical segment. Over 119–123 (HTLAD) the chain is Periplasmic. A helical membrane pass occupies residues 124–144 (FVGFLILGGLSIIAAITYTVG). Topologically, residues 145–148 (NRPY) are cytoplasmic. The chain crosses the membrane as a helical span at residues 149–169 (GYIGLGDISVLVFFGWLSVMG). The Periplasmic segment spans residues 170–176 (SWYLQAH). Residues 177-197 (TLIPALILPATACGLLATAVL) traverse the membrane as a helical segment. Topologically, residues 198–227 (NINNLRDINSDRENGKNTLVVRLGEVNARR) are cytoplasmic. The chain crosses the membrane as a helical span at residues 228–247 (YHACLLMGSLVCLALFNLFS). Over 248–250 (LHS) the chain is Periplasmic. The chain crosses the membrane as a helical span at residues 251–270 (LWGWLFLLAAPLLVKQARYV). The Cytoplasmic portion of the chain corresponds to 271–286 (MREMDPVAMRPMLERT). Residues 287-307 (VKGALLTNLLFVLGIFLSQWA) form a helical membrane-spanning segment. A topological domain (periplasmic) is located at residue Ala-308.

This sequence belongs to the MenA family. Type 1 subfamily.

It localises to the cell inner membrane. The catalysed reaction is an all-trans-polyprenyl diphosphate + 1,4-dihydroxy-2-naphthoate + H(+) = a 2-demethylmenaquinol + CO2 + diphosphate. Its pathway is quinol/quinone metabolism; menaquinone biosynthesis; menaquinol from 1,4-dihydroxy-2-naphthoate: step 1/2. Conversion of 1,4-dihydroxy-2-naphthoate (DHNA) to demethylmenaquinone (DMK). Attaches octaprenylpyrophosphate, a membrane-bound 40-carbon side chain to DHNA. The conversion of DHNA to DMK proceeds in three stages: the removal of the carboxyl group of DHNA as CO(2), the attachment of the isoprenoid side chain, and a quinol-to-quinone oxidation, which is thought to be spontaneous. In Escherichia coli (strain K12), this protein is 1,4-dihydroxy-2-naphthoate octaprenyltransferase.